A 304-amino-acid polypeptide reads, in one-letter code: Protein pxr1 (304 aa).

Residues 1–11 (MGLAAPRKKTK) show a composition bias toward basic residues. Disordered regions lie at residues 1-25 (MGLA…SRST), 144-238 (NATA…DTET), and 256-276 (TSLL…MGRR). A compositionally biased stretch (polar residues) spans 15–25 (DPNNTSWSRST). The G-patch domain maps to 25-79 (TDGFGHRILKAQGWTPGDFLGARNATHSDLFTTASASHIRVVLKDDTLGLGARPK). Composition is skewed to basic and acidic residues over residues 154–170 (LRVD…HENG) and 204–238 (GKEM…DTET). The span at 256 to 266 (TSLLASNGPST) shows a compositional bias: polar residues.

The protein belongs to the PINX1 family.

It localises to the nucleus. It is found in the nucleolus. Involved in rRNA-processing at A0, A1 and A2 sites and negatively regulates telomerase. The protein is Protein pxr1 (pxr1) of Aspergillus fumigatus (strain ATCC MYA-4609 / CBS 101355 / FGSC A1100 / Af293) (Neosartorya fumigata).